We begin with the raw amino-acid sequence, 729 residues long: uncharacterized protein (729 aa).

This is an uncharacterized protein from Caenorhabditis elegans.